The primary structure comprises 429 residues: Gamma-glutamyl phosphate reductase (429 aa).

It belongs to the gamma-glutamyl phosphate reductase family.

The protein resides in the cytoplasm. It catalyses the reaction L-glutamate 5-semialdehyde + phosphate + NADP(+) = L-glutamyl 5-phosphate + NADPH + H(+). It functions in the pathway amino-acid biosynthesis; L-proline biosynthesis; L-glutamate 5-semialdehyde from L-glutamate: step 2/2. Its function is as follows. Catalyzes the NADPH-dependent reduction of L-glutamate 5-phosphate into L-glutamate 5-semialdehyde and phosphate. The product spontaneously undergoes cyclization to form 1-pyrroline-5-carboxylate. The polypeptide is Gamma-glutamyl phosphate reductase (Bradyrhizobium sp. (strain BTAi1 / ATCC BAA-1182)).